Here is a 693-residue protein sequence, read N- to C-terminus: Elongation factor G (693 aa).

A tr-type G domain is found at 8–282 (EKTRNIGIMA…AVIDYLPSPL (275 aa)). GTP contacts are provided by residues 17-24 (AHIDAGKT), 81-85 (DTPGH), and 135-138 (NKMD).

This sequence belongs to the TRAFAC class translation factor GTPase superfamily. Classic translation factor GTPase family. EF-G/EF-2 subfamily.

It localises to the cytoplasm. Functionally, catalyzes the GTP-dependent ribosomal translocation step during translation elongation. During this step, the ribosome changes from the pre-translocational (PRE) to the post-translocational (POST) state as the newly formed A-site-bound peptidyl-tRNA and P-site-bound deacylated tRNA move to the P and E sites, respectively. Catalyzes the coordinated movement of the two tRNA molecules, the mRNA and conformational changes in the ribosome. The chain is Elongation factor G from Staphylococcus aureus (strain Newman).